The primary structure comprises 525 residues: Pre-mRNA-processing factor 19 homolog 2 (525 aa).

The U-box domain occupies 1–70 (MNCAISGEVP…PKTLHTASIP (70 aa)). WD repeat units follow at residues 220–261 (TNKP…STLT), 262–301 (GHSK…NYAC), 307–346 (DHSA…CLAQ), 351–390 (SKNV…NVAK), 393–431 (GHTG…NFKS), 433–469 (LSAD…AEWN), and 478–517 (SGTG…KANV). The short motif at 409-424 (FLATAAEDGVRLWDLR) is the DWD box element.

This sequence belongs to the WD repeat PRP19 family. As to quaternary structure, homotetramer. Component of the multiprotein assembly MOS4-associated complex (MAC) at least composed of MOS4, CDC5, PRL1 and PRP19 which is related to the PRP19C/Prp19 complex/NTC/Nineteen complex identified in other organisms. Associated with the spliceosome.

It is found in the nucleus. It carries out the reaction S-ubiquitinyl-[E2 ubiquitin-conjugating enzyme]-L-cysteine + [acceptor protein]-L-lysine = [E2 ubiquitin-conjugating enzyme]-L-cysteine + N(6)-ubiquitinyl-[acceptor protein]-L-lysine.. It functions in the pathway protein modification; protein ubiquitination. Functionally, probable ubiquitin-protein ligase which is mainly involved pre-mRNA splicing and DNA repair. Component of the MAC complex that probably regulates defense responses through transcriptional control and thereby is essential for plant innate immunity. This Arabidopsis thaliana (Mouse-ear cress) protein is Pre-mRNA-processing factor 19 homolog 2 (PRP19B).